The sequence spans 296 residues: MKKLLLIIITVFFAFNVAQASLPNIVASVNYEPITLNEFRARKKMIMALNNVESLTPAQDKQLSDLAIKSLIDESLLFQYAGDREIPQEEIDNAIKSIEDHNKMPHGSLLQYLKSRSVNPDSFISQIKSELIKMNILSSLSRSVQVSNKEIDVAILSSDQKDVEISMQVFTSKDGGNKAFTQMNNLKNRLKKCADVKKSLYDNFATMQIITDKLSKIEGVKQTIVKDLSSDKASNVFEVNNKFEIILVCSKKILNVNEDENNYVVNFLTNKKISQKAQKMFENMRKKAVIKIMLPS.

Residues 1-20 form the signal peptide; sequence MKKLLLIIITVFFAFNVAQA.

This is an uncharacterized protein from Rickettsia felis (strain ATCC VR-1525 / URRWXCal2) (Rickettsia azadi).